The sequence spans 300 residues: GTPase Era (300 aa).

The 169-residue stretch at 8 to 176 (RCGYVAIVGR…EALIAKHLPE (169 aa)) folds into the Era-type G domain. Residues 16 to 23 (GRPNVGKS) form a G1 region. A GTP-binding site is contributed by 16-23 (GRPNVGKS). The tract at residues 42–46 (QTTRH) is G2. The segment at 63-66 (DTPG) is G3. GTP is bound by residues 63–67 (DTPGM) and 125–128 (NKTD). Residues 125–128 (NKTD) are G4. A G5 region spans residues 155–157 (ISA). The region spanning 199–283 (VREKIMRQLG…MLNLWVKVKG (85 aa)) is the KH type-2 domain.

Belongs to the TRAFAC class TrmE-Era-EngA-EngB-Septin-like GTPase superfamily. Era GTPase family. Monomer.

It is found in the cytoplasm. Its subcellular location is the cell inner membrane. Its function is as follows. An essential GTPase that binds both GDP and GTP, with rapid nucleotide exchange. Plays a role in 16S rRNA processing and 30S ribosomal subunit biogenesis and possibly also in cell cycle regulation and energy metabolism. The polypeptide is GTPase Era (Pseudomonas putida (strain W619)).